A 1849-amino-acid chain; its full sequence is SH3 and multiple ankyrin repeat domains protein 2 (1849 aa).

Residues Met-1–Ile-33 are disordered. A compositionally biased stretch (low complexity) spans Ser-15–Ser-25. 6 ANK repeats span residues Thr-196 to Phe-226, Asp-230 to Tyr-259, Tyr-263 to Cys-293, Asn-297 to Ala-326, Ser-330 to Leu-359, and Asn-363 to Pro-393. A disordered region spans residues Gln-451–Pro-493. The SH3 domain occupies Val-526–Cys-585. The region spanning Thr-626–Thr-720 is the PDZ domain. Basic and acidic residues predominate over residues Ser-764–Glu-774. Residues Ser-764 to Ala-808 form a disordered region. Ser-831 carries the post-translational modification Phosphoserine. At Thr-860 the chain carries Phosphothreonine. The tract at residues Leu-878–Lys-910 is disordered. Residues Ile-887 to Pro-903 show a composition bias toward pro residues. Ser-960 is modified (phosphoserine). Disordered stretches follow at residues Leu-1013 to Asp-1293, Leu-1328 to Pro-1371, Pro-1432 to Asn-1526, and Ser-1574 to Ala-1594. A compositionally biased stretch (low complexity) spans Ser-1040–Ser-1052. Positions Val-1086 to Arg-1097 are enriched in basic and acidic residues. Position 1099 is a phosphoserine (Ser-1099). The span at Glu-1128 to Ala-1138 shows a compositional bias: acidic residues. 3 stretches are compositionally biased toward low complexity: residues Gly-1159–Gly-1170, Gly-1181–Gly-1199, and Arg-1208–Ser-1221. Positions Arg-1274–Asp-1293 are enriched in basic and acidic residues. Phosphothreonine is present on Thr-1278. The short motif at Ala-1327–Glu-1333 is the SH3-binding element. Positions Ser-1343–Gly-1357 are enriched in low complexity. The span at Thr-1445–Ala-1460 shows a compositional bias: polar residues. Over residues Val-1494–Glu-1505 the composition is skewed to basic and acidic residues. Residues Thr-1506–Glu-1522 show a composition bias toward low complexity. The span at Ile-1577–Ser-1588 shows a compositional bias: pro residues. An O-linked (GlcNAc) threonine glycan is attached at Thr-1667. The segment covering Phe-1678–Ser-1692 has biased composition (polar residues). Residues Phe-1678–Lys-1776 form a disordered region. Phosphoserine is present on residues Ser-1709 and Ser-1713. Composition is skewed to low complexity over residues Thr-1721–Ser-1738 and Arg-1760–Ser-1774. In terms of domain architecture, SAM spans Trp-1786 to Arg-1849.

Belongs to the SHANK family. As to quaternary structure, is part of a complex with DLG4/PSD-95 and DLGAP1/GKAP. Interacts with CTTN/cortactin SH3 domain, DLGAP1/GKAP and alpha-latrotoxin receptor 1. Interacts with DNM2, DBNL, GRID2, BAIAP2, SLC9A3, PLCB3 and CFTR. Interacts (via proline-rich region) with PDE4D. Interacts with ABI1 (via SH3 domain). In terms of tissue distribution, isoform 3 is present in epithelial colonic cells (at protein level).

It is found in the apical cell membrane. The protein localises to the cytoplasm. The protein resides in the synapse. Its subcellular location is the postsynaptic density. It localises to the cell projection. It is found in the growth cone. The protein localises to the dendritic spine. Seems to be an adapter protein in the postsynaptic density (PSD) of excitatory synapses that interconnects receptors of the postsynaptic membrane including NMDA-type and metabotropic glutamate receptors, and the actin-based cytoskeleton. May play a role in the structural and functional organization of the dendritic spine and synaptic junction. This is SH3 and multiple ankyrin repeat domains protein 2 (SHANK2) from Homo sapiens (Human).